The following is a 1335-amino-acid chain: Xanthine dehydrogenase/oxidase (1335 aa).

Residues 7–94 (DELVFFVNGK…HVAVTTVEGI (88 aa)) enclose the 2Fe-2S ferredoxin-type domain. [2Fe-2S] cluster-binding residues include Cys-46, Cys-51, Cys-54, Cys-76, Cys-115, Cys-118, Cys-150, and Cys-152. The 186-residue stretch at 231–416 (FEGERVTWIQ…VSIVIPYSRK (186 aa)) folds into the FAD-binding PCMH-type domain. Residues 259-266 (LVVGNTEI), Phe-339, 349-353 (SIGGN), Asp-362, Leu-406, and Lys-424 contribute to the FAD site. Cys-538 and Cys-995 are oxidised to a cystine. Mo-molybdopterin is bound by residues Gln-770 and Phe-801. Residues Glu-805 and Arg-883 each coordinate substrate. Arg-915 serves as a coordination point for Mo-molybdopterin. Phe-917 and Thr-1013 together coordinate substrate. Ala-1082 serves as a coordination point for Mo-molybdopterin. Glu-1264 acts as the Proton acceptor in catalysis.

The protein belongs to the xanthine dehydrogenase family. In terms of assembly, homodimer. Interacts with BTN1A1. Requires FAD as cofactor. The cofactor is Mo-molybdopterin. [2Fe-2S] cluster is required as a cofactor. Subject to partial proteolysis; this alters the enzyme from the dehydrogenase form (D) to the oxidase form (O). In terms of processing, contains sulfhydryl groups that are easily oxidized (in vitro); this alters the enzyme from the dehydrogenase form (D) to the oxidase form (O).

It localises to the cytoplasm. It is found in the peroxisome. Its subcellular location is the secreted. The catalysed reaction is xanthine + NAD(+) + H2O = urate + NADH + H(+). The enzyme catalyses hypoxanthine + NAD(+) + H2O = xanthine + NADH + H(+). It carries out the reaction xanthine + O2 + H2O = urate + H2O2. Its activity is regulated as follows. Can be converted from the dehydrogenase form (D) to the oxidase form (O) irreversibly by proteolysis or reversibly through the oxidation of sulfhydryl groups. Functionally, key enzyme in purine degradation. Catalyzes the oxidation of hypoxanthine to xanthine. Catalyzes the oxidation of xanthine to uric acid. Contributes to the generation of reactive oxygen species. This is Xanthine dehydrogenase/oxidase (Xdh) from Mus musculus (Mouse).